The sequence spans 138 residues: Type II secretion system protein I (138 aa).

A propeptide spans 1–6 (leader sequence); the sequence is MKHQRG. Y7 carries the N-methyltyrosine modification. The helical transmembrane segment at 7–29 threads the bilayer; it reads YSLIEVIVAFALLALALTLLLGS.

Belongs to the GSP I family. In terms of assembly, type II secretion is composed of four main components: the outer membrane complex, the inner membrane complex, the cytoplasmic secretion ATPase and the periplasm-spanning pseudopilus. Interacts with core component XpsG. Cleaved by prepilin peptidase. Post-translationally, methylated by prepilin peptidase at the amino group of the N-terminal tyrosine once the leader sequence is cleaved by prepilin peptidase.

The protein localises to the cell inner membrane. In terms of biological role, component of the type II secretion system required for the energy-dependent secretion of extracellular factors such as proteases and toxins from the periplasm. Part of the pseudopilus tip complex that is critical for the recognition and binding of secretion substrates. The chain is Type II secretion system protein I (xpsI) from Xanthomonas campestris pv. campestris (strain ATCC 33913 / DSM 3586 / NCPPB 528 / LMG 568 / P 25).